A 144-amino-acid polypeptide reads, in one-letter code: Large ribosomal subunit protein uL15 (144 aa).

Positions 1–25 (MFLNTIGARDGSRPEKKRVGRGIGS) are disordered.

It belongs to the universal ribosomal protein uL15 family. As to quaternary structure, part of the 50S ribosomal subunit.

Binds to the 23S rRNA. This chain is Large ribosomal subunit protein uL15, found in Methylococcus capsulatus (strain ATCC 33009 / NCIMB 11132 / Bath).